The sequence spans 874 residues: Leucine--tRNA ligase (874 aa).

The 'HIGH' region signature appears at 43–53 (PYPSGRIHIGH). Positions 630 to 634 (KMSKS) match the 'KMSKS' region motif. Lysine 633 is a binding site for ATP.

The protein belongs to the class-I aminoacyl-tRNA synthetase family.

The protein resides in the cytoplasm. The enzyme catalyses tRNA(Leu) + L-leucine + ATP = L-leucyl-tRNA(Leu) + AMP + diphosphate. This Bradyrhizobium sp. (strain BTAi1 / ATCC BAA-1182) protein is Leucine--tRNA ligase.